The primary structure comprises 518 residues: Integrator complex subunit 14 (518 aa).

The region spanning 2 to 204 (PTVVVMDVSL…KNVQSMFGKL (203 aa)) is the VWFA domain. Mg(2+) is bound by residues Ser10, Ser12, and Thr86.

This sequence belongs to the Integrator subunit 14 family. Component of the Integrator complex, composed of core subunits INTS1, INTS2, INTS3, INTS4, INTS5, INTS6, INTS7, INTS8, INTS9/RC74, INTS10, INTS11/CPSF3L, INTS12, INTS13, INTS14 and INTS15. The core complex associates with protein phosphatase 2A subunits PPP2CA and PPP2R1A, to form the Integrator-PP2A (INTAC) complex. INTS14 is part of the tail subcomplex, composed of INTS10, INTS13, INTS14 and INTS15.

The protein localises to the nucleus. Functionally, component of the integrator complex, a multiprotein complex that terminates RNA polymerase II (Pol II) transcription in the promoter-proximal region of genes. The integrator complex provides a quality checkpoint during transcription elongation by driving premature transcription termination of transcripts that are unfavorably configured for transcriptional elongation: the complex terminates transcription by (1) catalyzing dephosphorylation of the C-terminal domain (CTD) of Pol II subunit POLR2A/RPB1 and SUPT5H/SPT5, (2) degrading the exiting nascent RNA transcript via endonuclease activity and (3) promoting the release of Pol II from bound DNA. The integrator complex is also involved in terminating the synthesis of non-coding Pol II transcripts, such as enhancer RNAs (eRNAs), small nuclear RNAs (snRNAs), telomerase RNAs and long non-coding RNAs (lncRNAs). Within the integrator complex, INTS14 is part of the integrator tail module that acts as a platform for the recruitment of transcription factors at promoters. The polypeptide is Integrator complex subunit 14 (Xenopus tropicalis (Western clawed frog)).